A 527-amino-acid chain; its full sequence is RUS family member 1 (527 aa).

N21 carries N-linked (GlcNAc...) asparagine glycosylation. Residues 220-240 (SQETAVNLVGMLLSVIVSSFI) form a helical membrane-spanning segment. N243 carries an N-linked (GlcNAc...) asparagine glycan. Residues 245–265 (SLIVTWLVFLFFTSLHLFCNY) traverse the membrane as a helical segment. N-linked (GlcNAc...) asparagine glycosylation is present at N346. Residues 350–426 (TKNVNNNNNN…NNNNNNNNNK (77 aa)) are disordered. 2 N-linked (GlcNAc...) asparagine glycosylation sites follow: N467 and N497.

It belongs to the RUS1 family.

It localises to the membrane. The sequence is that of RUS family member 1 (rusf1) from Dictyostelium discoideum (Social amoeba).